Reading from the N-terminus, the 376-residue chain is MLDLIQTRRDLHQIPEIGLEEFKTQAYLLDVIEKLTTGKDFVQIRTWRTGILVYLQGSQPERTIGWRTDIDGLPIVEQTGLPFASQHQGRMHACGHDFHMTIALGCLERALEEQPKNNLLFLFQPAEENEAGGMLMYEAGAFGDWLPDQFYGLHVRPDLKVGQIATNTHTLFAGTCEVKIRFKGKGGHAAFPHEANDALVAASYFVTQVQSVVSRNVNPIEGAVVTFGVFQAGTTNNVITDTAFLHGTIRALTQDMSLLVQKRVKTVAEGIAAAFDMEVEVELKQGGYLPVENNPALARELMDFFDEKDGIELIDIEPAMTGEDFGYLLSKVDGVMFWLGIDSPYALHHPQMSPKEEVLAIGVAAVSSFLKKKAAE.

Residue aspartate 69 is part of the active site. The Proton acceptor role is filled by glutamate 128.

It belongs to the peptidase M20A family. N-acetyldiaminopimelate deacetylase subfamily.

It catalyses the reaction N-acetyl-(2S,6S)-2,6-diaminopimelate + H2O = (2S,6S)-2,6-diaminopimelate + acetate. The protein operates within amino-acid biosynthesis; L-lysine biosynthesis via DAP pathway; LL-2,6-diaminopimelate from (S)-tetrahydrodipicolinate (acetylase route): step 3/3. Functionally, catalyzes the conversion of N-acetyl-diaminopimelate to diaminopimelate and acetate. In Streptococcus pneumoniae (strain Taiwan19F-14), this protein is N-acetyldiaminopimelate deacetylase.